Here is a 329-residue protein sequence, read N- to C-terminus: Secretory carrier-associated membrane protein 2 (329 aa).

2 disordered regions span residues 1-21 and 51-72; these read MSAF…FQDP and VTQL…PTQP. At 1–153 the chain is on the cytoplasmic side; it reads MSAFDTNPFA…DYQRICKMLY (153 aa). A helical membrane pass occupies residues 154 to 174; that stretch reads YLWMLHSVTLFLNLLACLAWF. At 175–181 the chain is on the lumenal side; it reads SGNSSKG. Residues 182–202 form a helical membrane-spanning segment; that stretch reads VDFGLSILWFLIFTPCAFLCW. Residues 203–218 are Cytoplasmic-facing; that stretch reads YRPIYKAFRSDNSFSF. Positions 203-218 are interaction with SLC9A7; sequence YRPIYKAFRSDNSFSF. Residues 219–239 form a helical membrane-spanning segment; it reads FVFFFVFFCQIGIYIIQLVGI. The Lumenal segment spans residues 240-262; that stretch reads PGLGDSGWIAALSTLDNHSLAIS. A helical transmembrane segment spans residues 263-283; sequence VIMMVVAGFFTLCAVLSVFLL. At 284 to 329 the chain is on the cytoplasmic side; the sequence is QRVHSLYRRTGASFQQAQEEFSQGIFSSRTFHRAASSAAQGAFQGN. Phosphoserine is present on residues Ser319 and Ser320.

It belongs to the SCAMP family. In terms of assembly, interacts with SLC6A4 and SLC9A7. Interacts with SLC9A5; this interaction regulates SLC9A5 cell-surface targeting and SLC9A5 activity. Widely expressed.

The protein localises to the golgi apparatus. It localises to the trans-Golgi network membrane. Its subcellular location is the recycling endosome membrane. In terms of biological role, functions in post-Golgi recycling pathways. Acts as a recycling carrier to the cell surface. The chain is Secretory carrier-associated membrane protein 2 (SCAMP2) from Homo sapiens (Human).